The sequence spans 613 residues: Transcription factor Sp2 (613 aa).

The tract at residues 1-32 (MSDPQTSMAATAAVSPSDYLQPAASTTQDSQP) is disordered. Over residues 23-32 (AASTTQDSQP) the composition is skewed to polar residues. Ser-78 is modified (phosphoserine). 2 disordered regions span residues 170–197 (SPSSHKPVPIKPAPVQKSSTTTTPAQSG) and 225–255 (PGAATQLLTESPPAPLSKTNKKARKKSLPAA). Residues 185-197 (QKSSTTTTPAQSG) are compositionally biased toward polar residues. The 9aaTAD; inactive motif lies at 361-369 (GEVQTVLVQ). The segment covering 374 to 392 (ATAATASTTTCSSPASRAA) has biased composition (low complexity). A disordered region spans residues 374–402 (ATAATASTTTCSSPASRAAHLSGTSKKHS). C2H2-type zinc fingers lie at residues 525–549 (HVCHIPDCGKTFRKTSLLRAHVRLH), 555–579 (FVCNWFFCGKRFTRSDELQRHARTH), and 585–607 (FECAQCQKRFMRSDHLTKHYKTH).

This sequence belongs to the Sp1 C2H2-type zinc-finger protein family.

It is found in the nucleus. Its function is as follows. Binds to GC box promoters elements and selectively activates mRNA synthesis from genes that contain functional recognition sites. The protein is Transcription factor Sp2 (SP2) of Bos taurus (Bovine).